A 319-amino-acid polypeptide reads, in one-letter code: Malate dehydrogenase (319 aa).

NAD(+) contacts are provided by residues 7 to 13 (GAAGGIG) and Asp-34. 2 residues coordinate substrate: Arg-81 and Arg-87. Residues Asn-94 and 117 to 119 (ITN) contribute to the NAD(+) site. The substrate site is built by Asn-119 and Arg-153. His-177 (proton acceptor) is an active-site residue. Residue Met-227 participates in NAD(+) binding.

This sequence belongs to the LDH/MDH superfamily. MDH type 1 family. Homodimer.

The catalysed reaction is (S)-malate + NAD(+) = oxaloacetate + NADH + H(+). Catalyzes the reversible oxidation of malate to oxaloacetate. The sequence is that of Malate dehydrogenase from Psychromonas ingrahamii (strain DSM 17664 / CCUG 51855 / 37).